The primary structure comprises 88 residues: uncharacterized protein (88 aa).

This is an uncharacterized protein from Sinorhizobium fredii (strain NBRC 101917 / NGR234).